Consider the following 293-residue polypeptide: Protease HtpX (293 aa).

A run of 2 helical transmembrane segments spans residues Ile4–Leu24 and Leu38–Phe58. His145 contributes to the Zn(2+) binding site. Residue Glu146 is part of the active site. Zn(2+) is bound at residue His149. 2 consecutive transmembrane segments (helical) span residues Ile156 to Ile176 and Ile193 to Ile213. Glu222 is a Zn(2+) binding site.

The protein belongs to the peptidase M48B family. It depends on Zn(2+) as a cofactor.

It localises to the cell inner membrane. The chain is Protease HtpX from Cellvibrio japonicus (strain Ueda107) (Pseudomonas fluorescens subsp. cellulosa).